Reading from the N-terminus, the 526-residue chain is 2-isopropylmalate synthase (526 aa).

Positions 5–267 constitute a Pyruvate carboxyltransferase domain; that stretch reads VIIFDTTLRD…HTGIRHQEIY (263 aa). Mn(2+)-binding residues include Asp-14, His-202, His-204, and Asn-238. Positions 393–526 are regulatory domain; it reads RLEYFSVQSG…VPSISTSSTH (134 aa).

The protein belongs to the alpha-IPM synthase/homocitrate synthase family. LeuA type 1 subfamily. Homodimer. Requires Mn(2+) as cofactor.

The protein localises to the cytoplasm. It catalyses the reaction 3-methyl-2-oxobutanoate + acetyl-CoA + H2O = (2S)-2-isopropylmalate + CoA + H(+). Its pathway is amino-acid biosynthesis; L-leucine biosynthesis; L-leucine from 3-methyl-2-oxobutanoate: step 1/4. Functionally, catalyzes the condensation of the acetyl group of acetyl-CoA with 3-methyl-2-oxobutanoate (2-ketoisovalerate) to form 3-carboxy-3-hydroxy-4-methylpentanoate (2-isopropylmalate). This is 2-isopropylmalate synthase from Edwardsiella ictaluri (strain 93-146).